Consider the following 347-residue polypeptide: tRNA N6-adenosine threonylcarbamoyltransferase (347 aa).

Residues histidine 111 and histidine 115 each contribute to the Fe cation site. Substrate is bound by residues 133–137 (LASGG), aspartate 166, glycine 179, and asparagine 278. Position 306 (aspartate 306) interacts with Fe cation.

Belongs to the KAE1 / TsaD family. Requires Fe(2+) as cofactor.

It is found in the cytoplasm. It catalyses the reaction L-threonylcarbamoyladenylate + adenosine(37) in tRNA = N(6)-L-threonylcarbamoyladenosine(37) in tRNA + AMP + H(+). In terms of biological role, required for the formation of a threonylcarbamoyl group on adenosine at position 37 (t(6)A37) in tRNAs that read codons beginning with adenine. Is involved in the transfer of the threonylcarbamoyl moiety of threonylcarbamoyl-AMP (TC-AMP) to the N6 group of A37, together with TsaE and TsaB. TsaD likely plays a direct catalytic role in this reaction. In Paramagnetospirillum magneticum (strain ATCC 700264 / AMB-1) (Magnetospirillum magneticum), this protein is tRNA N6-adenosine threonylcarbamoyltransferase.